A 268-amino-acid chain; its full sequence is UPF0328 protein ECU05_1640/ECU11_0090 (268 aa).

It belongs to the UPF0328 family.

The protein is UPF0328 protein ECU05_1640/ECU11_0090 of Encephalitozoon cuniculi (strain GB-M1) (Microsporidian parasite).